Consider the following 383-residue polypeptide: Subtelomeric hrmA-associated cluster protein AFUB_078970 (383 aa).

2 disordered regions span residues 118-145 and 249-318; these read NPVSEVPESPPSTVKSSGDASVSDKDDD and QATQ…SARP. A compositionally biased stretch (low complexity) spans 119 to 134; sequence PVSEVPESPPSTVKSS. In terms of domain architecture, Myb-like spans 318–364; it reads PYSAAEDDILQTLVARGLAWEEIEKEFGLRFAKRTMRSLQMRWSRKL.

Its function is as follows. Myb-like domain-containing protein; part of the subtelomeric hrmA-associated cluster (HAC) containing genes that alter the hyphal surface (such as reduced total chitin or increased beta-glucan exposure) and perturb inter-hyphal interactions within the developing biofilms, resulting in a loss of vertically aligned polarized growing filaments. Consequently, this hypoxia-typic morphotype (called H-MORPH) with altered biofilm architecture leads to increased hypoxia fitness, increased host inflammation, rapid disease progression, and mortality in a murine model of invasive aspergillosis. This chain is Subtelomeric hrmA-associated cluster protein AFUB_078970, found in Aspergillus fumigatus (strain CBS 144.89 / FGSC A1163 / CEA10) (Neosartorya fumigata).